Here is a 211-residue protein sequence, read N- to C-terminus: Thiamine-phosphate synthase (211 aa).

4-amino-2-methyl-5-(diphosphooxymethyl)pyrimidine-binding positions include 37 to 41 (QLRIK) and N69. Residues D70 and D89 each contribute to the Mg(2+) site. Residue S108 coordinates 4-amino-2-methyl-5-(diphosphooxymethyl)pyrimidine. 134-136 (TQT) is a binding site for 2-[(2R,5Z)-2-carboxy-4-methylthiazol-5(2H)-ylidene]ethyl phosphate. K137 provides a ligand contact to 4-amino-2-methyl-5-(diphosphooxymethyl)pyrimidine. 2-[(2R,5Z)-2-carboxy-4-methylthiazol-5(2H)-ylidene]ethyl phosphate contacts are provided by residues G166 and 186–187 (VS).

Belongs to the thiamine-phosphate synthase family. Mg(2+) serves as cofactor.

It catalyses the reaction 2-[(2R,5Z)-2-carboxy-4-methylthiazol-5(2H)-ylidene]ethyl phosphate + 4-amino-2-methyl-5-(diphosphooxymethyl)pyrimidine + 2 H(+) = thiamine phosphate + CO2 + diphosphate. The enzyme catalyses 2-(2-carboxy-4-methylthiazol-5-yl)ethyl phosphate + 4-amino-2-methyl-5-(diphosphooxymethyl)pyrimidine + 2 H(+) = thiamine phosphate + CO2 + diphosphate. The catalysed reaction is 4-methyl-5-(2-phosphooxyethyl)-thiazole + 4-amino-2-methyl-5-(diphosphooxymethyl)pyrimidine + H(+) = thiamine phosphate + diphosphate. Its pathway is cofactor biosynthesis; thiamine diphosphate biosynthesis; thiamine phosphate from 4-amino-2-methyl-5-diphosphomethylpyrimidine and 4-methyl-5-(2-phosphoethyl)-thiazole: step 1/1. Its function is as follows. Condenses 4-methyl-5-(beta-hydroxyethyl)thiazole monophosphate (THZ-P) and 2-methyl-4-amino-5-hydroxymethyl pyrimidine pyrophosphate (HMP-PP) to form thiamine monophosphate (TMP). This chain is Thiamine-phosphate synthase, found in Escherichia coli (strain SE11).